A 288-amino-acid chain; its full sequence is Protein sprouty homolog 3 (288 aa).

The SPR domain maps to 154–267 (KCVPCTAVRP…PGCRCKRHTN (114 aa)).

This sequence belongs to the sprouty family. In terms of assembly, interacts with TESK1. Interacts with USP11. Interacts with CAV1 (via C-terminus). As to expression, expressed in the brain with expression the highest in Purkinje cell bodies and projections in the cerebellum (at protein level). Also expressed in central and peripheral nervous system ganglion cells, superior cervical ganglion and dorsal root ganglion (at protein level). Expressed in the retinal ganglion cell layer and the inner nuclear layer (at protein level).

It localises to the cytoplasm. Functionally, inhibits neurite branching, arbor length and neurite complexity. Inhibits EGF-mediated p42/44 ERK signaling. Negatively regulates the MAPK cascade, resulting in a reduction of extracellular matrix protein accumulation. May function as an antagonist of fibroblast growth factor (FGF) pathways and may negatively modulate respiratory organogenesis. The protein is Protein sprouty homolog 3 of Mus musculus (Mouse).